The following is a 134-amino-acid chain: Thioredoxin-like protein Clot (134 aa).

Residues 1–134 (MTLKKVDANP…LILPLLAPST (134 aa)) form the Thioredoxin domain. Catalysis depends on nucleophile residues C48 and C51. C48 and C51 form a disulfide bridge.

Belongs to the thioredoxin family.

Functionally, probable thiol-disulfide oxidoreductase that may participate in various redox reactions. This is Thioredoxin-like protein Clot from Arabidopsis thaliana (Mouse-ear cress).